A 263-amino-acid chain; its full sequence is Aquaporin Lacbi1:247946 (263 aa).

Over 1–18 the chain is Cytoplasmic; it reads MKLTISHHKCAIRKVMAE. A helical membrane pass occupies residues 19–39; sequence FVGVALLVIFGAGTACQVVLS. Residues 40–45 are Extracellular-facing; the sequence is TNPSSF. Residues 46–66 traverse the membrane as a helical segment; that stretch reads LSINFGWAIGIATGAWVSAGI. The Cytoplasmic segment spans residues 67–89; that stretch reads SGGHINPAITIAMATYRGFPWRE. The short motif at 72-74 is the NPA 1 element; the sequence is NPA. A helical membrane pass occupies residues 90 to 110; sequence VPGYIFAQALGGFVGAALVYA. Over 111–143 the chain is Extracellular; it reads NYFHAIDIFEGGHIRTQATASLFATFALPYMTQ. Residues 144 to 164 traverse the membrane as a helical segment; that stretch reads ASCFFSEFLATAVLFIVFLAL. Topologically, residues 165 to 169 are cytoplasmic; sequence NDKHN. A helical membrane pass occupies residues 170–190; it reads GALTNGLLPFALFILFIGLGA. Topologically, residues 191 to 227 are extracellular; the sequence is SLGMQTGYAVNPARDFGPRLFLAMAGYGKAVFNYRRQ. The NPA 2 signature appears at 201–203; sequence NPA. A helical transmembrane segment spans residues 228 to 248; it reads YWIWAPIIAPILGAQAGGLLY. At 249–263 the chain is on the cytoplasmic side; it reads DTSIYNGDDSPIKWR.

This sequence belongs to the MIP/aquaporin (TC 1.A.8) family.

Its subcellular location is the membrane. It catalyses the reaction H2O(in) = H2O(out). Functionally, water channel required to facilitate the transport of water across membranes. Shows low but significant water conductivity, but no glycerol nor ammonium transport activities. This chain is Aquaporin Lacbi1:247946, found in Laccaria bicolor (strain S238N-H82 / ATCC MYA-4686) (Bicoloured deceiver).